The sequence spans 179 residues: Ribosomal RNA small subunit methyltransferase G (179 aa).

Residues Gly54, Phe59, 105–106 (IE), and Arg121 contribute to the S-adenosyl-L-methionine site.

It belongs to the methyltransferase superfamily. RNA methyltransferase RsmG family.

The protein resides in the cytoplasm. The catalysed reaction is guanosine(527) in 16S rRNA + S-adenosyl-L-methionine = N(7)-methylguanosine(527) in 16S rRNA + S-adenosyl-L-homocysteine. In terms of biological role, specifically methylates the N7 position of guanine in position 527 of 16S rRNA. This Helicobacter bizzozeronii protein is Ribosomal RNA small subunit methyltransferase G.